A 260-amino-acid chain; its full sequence is Ribosome maturation factor RimP (260 aa).

Positions 198 to 260 (QSLGILPPPP…RGDIDPIEGE (63 aa)) are disordered. Composition is skewed to basic and acidic residues over residues 210 to 228 (AKTD…ENGK) and 238 to 254 (NTKE…RGDI).

Belongs to the RimP family.

It localises to the cytoplasm. Functionally, required for maturation of 30S ribosomal subunits. This is Ribosome maturation factor RimP from Nitrobacter winogradskyi (strain ATCC 25391 / DSM 10237 / CIP 104748 / NCIMB 11846 / Nb-255).